Here is a 312-residue protein sequence, read N- to C-terminus: Olfactory receptor 2L8 (312 aa).

Residues Met-1 to Leu-24 are Extracellular-facing. A glycan (N-linked (GlcNAc...) asparagine) is linked at Asn-5. A helical transmembrane segment spans residues Phe-25–Ile-48. Residues Phe-49–Thr-56 lie on the Cytoplasmic side of the membrane. A helical transmembrane segment spans residues Pro-57–Pro-78. Topologically, residues Lys-79–Gln-99 are extracellular. Residue Asn-88 is glycosylated (N-linked (GlcNAc...) asparagine). The cysteines at positions 96 and 188 are disulfide-linked. Residues Ser-100–Tyr-119 form a helical membrane-spanning segment. Topologically, residues Asp-120–Arg-138 are cytoplasmic. Residues Val-139–Ala-157 traverse the membrane as a helical segment. At His-158 to Tyr-194 the chain is on the extracellular side. The chain crosses the membrane as a helical span at residues Glu-195 to Gly-218. Residues Gln-219–Lys-235 are Cytoplasmic-facing. Residues Ala-236 to Tyr-258 form a helical membrane-spanning segment. The Extracellular segment spans residues Leu-259 to Lys-271. Residues Val-272 to Leu-291 traverse the membrane as a helical segment. The Cytoplasmic segment spans residues Arg-292–Met-312.

It belongs to the G-protein coupled receptor 1 family.

It localises to the cell membrane. In terms of biological role, odorant receptor. This is Olfactory receptor 2L8 (OR2L8) from Homo sapiens (Human).